The following is a 267-amino-acid chain: 3-methyl-2-oxobutanoate hydroxymethyltransferase (267 aa).

Mg(2+)-binding residues include Asp45 and Asp84. 3-methyl-2-oxobutanoate-binding positions include 45–46 (DS), Asp84, and Lys113. Glu115 provides a ligand contact to Mg(2+). The active-site Proton acceptor is the Glu182.

The protein belongs to the PanB family. In terms of assembly, homodecamer; pentamer of dimers. The cofactor is Mg(2+).

It is found in the cytoplasm. It carries out the reaction 3-methyl-2-oxobutanoate + (6R)-5,10-methylene-5,6,7,8-tetrahydrofolate + H2O = 2-dehydropantoate + (6S)-5,6,7,8-tetrahydrofolate. It functions in the pathway cofactor biosynthesis; coenzyme A biosynthesis. In terms of biological role, catalyzes the reversible reaction in which hydroxymethyl group from 5,10-methylenetetrahydrofolate is transferred onto alpha-ketoisovalerate to form ketopantoate. The chain is 3-methyl-2-oxobutanoate hydroxymethyltransferase from Saccharolobus islandicus (strain Y.G.57.14 / Yellowstone #1) (Sulfolobus islandicus).